The sequence spans 123 residues: MVKLTSIAAGVAAIAAGVAAAPATTTLSPSDERVNLVELGVYVSDIRAHLAQYYLFQAAHPSETYPVEIAEAVFNYGDFTTMLTGIPAEQVTRVITGVPWYSTRLRPAISSALSKDGIYTIAN.

The signal sequence occupies residues 1 to 20 (MVKLTSIAAGVAAIAAGVAA).

It belongs to the SRP1/TIP1 family. Seripauperin subfamily.

The polypeptide is Seripauperin-16 (PAU16) (Saccharomyces cerevisiae (strain ATCC 204508 / S288c) (Baker's yeast)).